The following is a 787-amino-acid chain: Protein translocase subunit SecA (787 aa).

Residues Gln-85, 103-107 (GEGKT), and Asp-492 each bind ATP.

This sequence belongs to the SecA family. In terms of assembly, monomer and homodimer. Part of the essential Sec protein translocation apparatus which comprises SecA, SecYEG and auxiliary proteins SecDF. Other proteins may also be involved.

It is found in the cell membrane. It localises to the cytoplasm. It carries out the reaction ATP + H2O + cellular proteinSide 1 = ADP + phosphate + cellular proteinSide 2.. Its function is as follows. Part of the Sec protein translocase complex. Interacts with the SecYEG preprotein conducting channel. Has a central role in coupling the hydrolysis of ATP to the transfer of proteins into and across the cell membrane, serving as an ATP-driven molecular motor driving the stepwise translocation of polypeptide chains across the membrane. This Latilactobacillus sakei subsp. sakei (strain 23K) (Lactobacillus sakei subsp. sakei) protein is Protein translocase subunit SecA.